We begin with the raw amino-acid sequence, 126 residues long: Large ribosomal subunit protein bL12 (126 aa).

The protein belongs to the bacterial ribosomal protein bL12 family. As to quaternary structure, homodimer. Part of the ribosomal stalk of the 50S ribosomal subunit. Forms a multimeric L10(L12)X complex, where L10 forms an elongated spine to which 2 to 4 L12 dimers bind in a sequential fashion. Binds GTP-bound translation factors.

Forms part of the ribosomal stalk which helps the ribosome interact with GTP-bound translation factors. Is thus essential for accurate translation. This Streptococcus pyogenes serotype M28 (strain MGAS6180) protein is Large ribosomal subunit protein bL12.